We begin with the raw amino-acid sequence, 199 residues long: Recombination protein RecR (199 aa).

The C4-type zinc finger occupies Cys-57–Cys-72. Positions Thr-80 to Ser-176 constitute a Toprim domain.

This sequence belongs to the RecR family.

Its function is as follows. May play a role in DNA repair. It seems to be involved in an RecBC-independent recombinational process of DNA repair. It may act with RecF and RecO. This chain is Recombination protein RecR, found in Lactobacillus helveticus (strain DPC 4571).